Here is a 355-residue protein sequence, read N- to C-terminus: tRNA-specific 2-thiouridylase MnmA (355 aa).

Residues 6-13 and Leu-33 contribute to the ATP site; that span reads LLSGGVDS. Cys-100 functions as the Nucleophile in the catalytic mechanism. Cys-100 and Cys-195 form a disulfide bridge. Residue Gly-123 coordinates ATP. The segment at 145–147 is interaction with tRNA; it reads KDQ. Cys-195 (cysteine persulfide intermediate) is an active-site residue.

Belongs to the MnmA/TRMU family.

The protein localises to the cytoplasm. The catalysed reaction is S-sulfanyl-L-cysteinyl-[protein] + uridine(34) in tRNA + AH2 + ATP = 2-thiouridine(34) in tRNA + L-cysteinyl-[protein] + A + AMP + diphosphate + H(+). Catalyzes the 2-thiolation of uridine at the wobble position (U34) of tRNA, leading to the formation of s(2)U34. This chain is tRNA-specific 2-thiouridylase MnmA, found in Borreliella burgdorferi (strain ATCC 35210 / DSM 4680 / CIP 102532 / B31) (Borrelia burgdorferi).